Reading from the N-terminus, the 411-residue chain is Fructose-1,6-bisphosphatase, chloroplastic (411 aa).

Residues methionine 1 to methionine 53 constitute a chloroplast transit peptide. The Mg(2+) site is built by glutamate 133, glutamate 162, aspartate 183, leucine 185, and aspartate 186. Aspartate 186–serine 189 is a binding site for substrate. A disulfide bridge links cysteine 227 with cysteine 232. Positions 291, 323, 341, 343, and 353 each coordinate substrate. Glutamate 359 contributes to the Mg(2+) binding site.

This sequence belongs to the FBPase class 1 family. Homotetramer. Mg(2+) serves as cofactor.

The protein resides in the plastid. Its subcellular location is the chloroplast stroma. The enzyme catalyses beta-D-fructose 1,6-bisphosphate + H2O = beta-D-fructose 6-phosphate + phosphate. The protein operates within carbohydrate biosynthesis; Calvin cycle. This chain is Fructose-1,6-bisphosphatase, chloroplastic (FBP), found in Brassica napus (Rape).